The primary structure comprises 227 residues: Cytochrome c oxidase subunit 2 (227 aa).

The Mitochondrial intermembrane segment spans residues 1–14 (MAYPMQLGLQDATS). Residues 15-45 (PIMEELMNFHDHTLMIVFLISSLVLYLISLM) form a helical membrane-spanning segment. Residues 46–59 (LTTKLIHTNTMDAQ) lie on the Mitochondrial matrix side of the membrane. The helical transmembrane segment at 60–87 (EVETIWTILPAIILVLIALPSLRILYMM) threads the bilayer. The Mitochondrial intermembrane segment spans residues 88 to 227 (DEINNPVLTV…FFENWSSSMT (140 aa)). Residues histidine 161, cysteine 196, glutamate 198, cysteine 200, histidine 204, and methionine 207 each coordinate Cu cation. Residue glutamate 198 coordinates Mg(2+).

Belongs to the cytochrome c oxidase subunit 2 family. In terms of assembly, component of the cytochrome c oxidase (complex IV, CIV), a multisubunit enzyme composed of 14 subunits. The complex is composed of a catalytic core of 3 subunits MT-CO1, MT-CO2 and MT-CO3, encoded in the mitochondrial DNA, and 11 supernumerary subunits COX4I, COX5A, COX5B, COX6A, COX6B, COX6C, COX7A, COX7B, COX7C, COX8 and NDUFA4, which are encoded in the nuclear genome. The complex exists as a monomer or a dimer and forms supercomplexes (SCs) in the inner mitochondrial membrane with NADH-ubiquinone oxidoreductase (complex I, CI) and ubiquinol-cytochrome c oxidoreductase (cytochrome b-c1 complex, complex III, CIII), resulting in different assemblies (supercomplex SCI(1)III(2)IV(1) and megacomplex MCI(2)III(2)IV(2)). Found in a complex with TMEM177, COA6, COX18, COX20, SCO1 and SCO2. Interacts with TMEM177 in a COX20-dependent manner. Interacts with COX20. Interacts with COX16. Cu cation is required as a cofactor.

It is found in the mitochondrion inner membrane. The enzyme catalyses 4 Fe(II)-[cytochrome c] + O2 + 8 H(+)(in) = 4 Fe(III)-[cytochrome c] + 2 H2O + 4 H(+)(out). Functionally, component of the cytochrome c oxidase, the last enzyme in the mitochondrial electron transport chain which drives oxidative phosphorylation. The respiratory chain contains 3 multisubunit complexes succinate dehydrogenase (complex II, CII), ubiquinol-cytochrome c oxidoreductase (cytochrome b-c1 complex, complex III, CIII) and cytochrome c oxidase (complex IV, CIV), that cooperate to transfer electrons derived from NADH and succinate to molecular oxygen, creating an electrochemical gradient over the inner membrane that drives transmembrane transport and the ATP synthase. Cytochrome c oxidase is the component of the respiratory chain that catalyzes the reduction of oxygen to water. Electrons originating from reduced cytochrome c in the intermembrane space (IMS) are transferred via the dinuclear copper A center (CU(A)) of subunit 2 and heme A of subunit 1 to the active site in subunit 1, a binuclear center (BNC) formed by heme A3 and copper B (CU(B)). The BNC reduces molecular oxygen to 2 water molecules using 4 electrons from cytochrome c in the IMS and 4 protons from the mitochondrial matrix. This is Cytochrome c oxidase subunit 2 (MT-CO2) from Desmodillus auricularis (Cape short-eared gerbil).